We begin with the raw amino-acid sequence, 350 residues long: Transcription factor MYB102 (350 aa).

HTH myb-type domains follow at residues 9–65 and 66–116; these read KNGL…RPDI and KRGR…RKKL. DNA-binding regions (H-T-H motif) lie at residues 37–61 and 89–112; these read WRTL…TNYL and WSAI…NTHI.

In terms of tissue distribution, expressed in rosette leaves, cauline leaves and flowers.

Its subcellular location is the nucleus. Functionally, probable transcription factor that may function in osmotic stress and wounding signaling pathways. Contributes to basal resistance against the herbivore Pieris rapae (white cabbage butterfly) feeding. This Arabidopsis thaliana (Mouse-ear cress) protein is Transcription factor MYB102.